Consider the following 263-residue polypeptide: Thiazole synthase (263 aa).

The active-site Schiff-base intermediate with DXP is Lys102. 1-deoxy-D-xylulose 5-phosphate is bound by residues Gly164, 190 to 191 (AG), and 212 to 213 (NT).

It belongs to the ThiG family. As to quaternary structure, homotetramer. Forms heterodimers with either ThiH or ThiS.

The protein resides in the cytoplasm. The catalysed reaction is [ThiS sulfur-carrier protein]-C-terminal-Gly-aminoethanethioate + 2-iminoacetate + 1-deoxy-D-xylulose 5-phosphate = [ThiS sulfur-carrier protein]-C-terminal Gly-Gly + 2-[(2R,5Z)-2-carboxy-4-methylthiazol-5(2H)-ylidene]ethyl phosphate + 2 H2O + H(+). The protein operates within cofactor biosynthesis; thiamine diphosphate biosynthesis. Its function is as follows. Catalyzes the rearrangement of 1-deoxy-D-xylulose 5-phosphate (DXP) to produce the thiazole phosphate moiety of thiamine. Sulfur is provided by the thiocarboxylate moiety of the carrier protein ThiS. In vitro, sulfur can be provided by H(2)S. The chain is Thiazole synthase from Helicobacter hepaticus (strain ATCC 51449 / 3B1).